Reading from the N-terminus, the 142-residue chain is Putative pre-16S rRNA nuclease (142 aa).

It belongs to the YqgF nuclease family.

Its subcellular location is the cytoplasm. In terms of biological role, could be a nuclease involved in processing of the 5'-end of pre-16S rRNA. The chain is Putative pre-16S rRNA nuclease from Mesoplasma florum (strain ATCC 33453 / NBRC 100688 / NCTC 11704 / L1) (Acholeplasma florum).